We begin with the raw amino-acid sequence, 460 residues long: Dynactin subunit 4 (460 aa).

A2 is modified (N-acetylalanine). Positions 152–172 form a coiled coil; sequence QQLAQKEKVERDRKKLARRRN. S196 is modified (phosphoserine). K215 participates in a covalent cross-link: Glycyl lysine isopeptide (Lys-Gly) (interchain with G-Cter in SUMO2). A Phosphothreonine modification is found at T407.

The protein belongs to the dynactin subunit 4 family. In terms of assembly, subunit of dynactin, a multiprotein complex part of a tripartite complex with dynein and a adapter, such as BICDL1, BICD2 or HOOK3. The dynactin complex is built around ACTR1A/ACTB filament and consists of an actin-related filament composed of a shoulder domain, a pointed end and a barbed end. Its length is defined by its flexible shoulder domain. The soulder is composed of 2 DCTN1 subunits, 4 DCTN2 and 2 DCTN3. The 4 DCNT2 (via N-terminus) bind the ACTR1A filament and act as molecular rulers to determine the length. The pointed end is important for binding dynein-dynactin cargo adapters. Consists of 4 subunits: ACTR10, DCNT4, DCTN5 and DCTN6. The barbed end is composed of a CAPZA1:CAPZB heterodimers, which binds ACTR1A/ACTB filament and dynactin and stabilizes dynactin. Interacts with ATP7B, but not ATP7A, in a copper-dependent manner. Interacts with ANK2; this interaction is required for localization at costameres. Interacts with N4BP2L1.

The protein resides in the cytoplasm. It is found in the cytoskeleton. It localises to the microtubule organizing center. The protein localises to the centrosome. Its subcellular location is the stress fiber. The protein resides in the cell cortex. It is found in the myofibril. It localises to the sarcomere. Functionally, part of the dynactin complex that activates the molecular motor dynein for ultra-processive transport along microtubules. The polypeptide is Dynactin subunit 4 (DCTN4) (Pongo abelii (Sumatran orangutan)).